The following is a 326-amino-acid chain: Protein GVP36 (326 aa).

Serine 2 is subject to N-acetylserine. Position 2 is a phosphoserine (serine 2). Residues lysine 13, lysine 305, and lysine 313 each participate in a glycyl lysine isopeptide (Lys-Gly) (interchain with G-Cter in ubiquitin) cross-link. Residues 299-326 (AEEPEAKPEVAEEEKPQTAISMNDEDDA) are disordered. The span at 302-314 (PEAKPEVAEEEKP) shows a compositional bias: basic and acidic residues. Serine 319 carries the post-translational modification Phosphoserine.

It is found in the golgi apparatus membrane. This Saccharomyces cerevisiae (strain ATCC 204508 / S288c) (Baker's yeast) protein is Protein GVP36 (GVP36).